We begin with the raw amino-acid sequence, 241 residues long: Uridylate kinase (241 aa).

13–16 (KVSG) provides a ligand contact to ATP. Glycine 55 is a binding site for UMP. Glycine 56 and arginine 60 together coordinate ATP. Residues aspartate 75 and 136–143 (TGNPFFTT) contribute to the UMP site. ATP contacts are provided by threonine 163, glutamine 164, tyrosine 169, and aspartate 172.

The protein belongs to the UMP kinase family. In terms of assembly, homohexamer.

Its subcellular location is the cytoplasm. It catalyses the reaction UMP + ATP = UDP + ADP. Its pathway is pyrimidine metabolism; CTP biosynthesis via de novo pathway; UDP from UMP (UMPK route): step 1/1. With respect to regulation, inhibited by UTP. Its function is as follows. Catalyzes the reversible phosphorylation of UMP to UDP. The sequence is that of Uridylate kinase from Parvibaculum lavamentivorans (strain DS-1 / DSM 13023 / NCIMB 13966).